We begin with the raw amino-acid sequence, 242 residues long: 6-carboxyhexanoate--CoA ligase (242 aa).

It belongs to the BioW family. Homodimer. Mg(2+) serves as cofactor.

It carries out the reaction heptanedioate + ATP + CoA = 6-carboxyhexanoyl-CoA + AMP + diphosphate. It functions in the pathway metabolic intermediate metabolism; pimeloyl-CoA biosynthesis; pimeloyl-CoA from pimelate: step 1/1. Catalyzes the transformation of pimelate into pimeloyl-CoA with concomitant hydrolysis of ATP to AMP. This chain is 6-carboxyhexanoate--CoA ligase, found in Veillonella parvula (strain ATCC 10790 / DSM 2008 / CCUG 5123 / JCM 12972 / NCTC 11810 / Te3) (Veillonella alcalescens).